The primary structure comprises 222 residues: uncharacterized protein (222 aa).

This is an uncharacterized protein from Methanocaldococcus jannaschii (strain ATCC 43067 / DSM 2661 / JAL-1 / JCM 10045 / NBRC 100440) (Methanococcus jannaschii).